A 329-amino-acid polypeptide reads, in one-letter code: D-threo-aldose 1-dehydrogenase (329 aa).

Y58 acts as the Proton donor in catalysis. H145 serves as a coordination point for substrate.

It belongs to the aldo/keto reductase family.

The catalysed reaction is a D-threo-aldose + NAD(+) = a D-threo-aldono-1,5-lactone + NADH + H(+). Its activity is regulated as follows. Inhibited strongly by Hg(2+), Cd(2+) and para-chloromercuribenzoic acid (PCMB) and weakly by Zn(2+) and iodoacetamide. Also inhibited strongly by L-xylose but not D-glucose. Its function is as follows. Catalyzes the oxidation of L-fucose to L-fuconolactone in the presence of NADP(+). Also active against L-galactose and, to a much lesser degree, D-arabinose. Uses NADP(+) as a hydrogen acceptor much more efficiently than NAD(+). The polypeptide is D-threo-aldose 1-dehydrogenase (Pseudomonas sp).